The following is a 639-amino-acid chain: Mediator of RNA polymerase II transcription subunit 17 (639 aa).

Residues 160 to 187 (RLQNFNAAADKLLKSASRLENEVASETR) adopt a coiled-coil conformation.

This sequence belongs to the Mediator complex subunit 17 family. Component of the Mediator complex.

The protein resides in the nucleus. Component of the Mediator complex, a coactivator involved in the regulated transcription of nearly all RNA polymerase II-dependent genes. Mediator functions as a bridge to convey information from gene-specific regulatory proteins to the basal RNA polymerase II transcription machinery. Mediator is recruited to promoters by direct interactions with regulatory proteins and serves as a scaffold for the assembly of a functional preinitiation complex with RNA polymerase II and the general transcription factors. The sequence is that of Mediator of RNA polymerase II transcription subunit 17 (srb4) from Neosartorya fischeri (strain ATCC 1020 / DSM 3700 / CBS 544.65 / FGSC A1164 / JCM 1740 / NRRL 181 / WB 181) (Aspergillus fischerianus).